We begin with the raw amino-acid sequence, 98 residues long: Large ribosomal subunit protein uL23 (98 aa).

The protein belongs to the universal ribosomal protein uL23 family. As to quaternary structure, part of the 50S ribosomal subunit. Contacts protein L29, and trigger factor when it is bound to the ribosome.

Functionally, one of the early assembly proteins it binds 23S rRNA. One of the proteins that surrounds the polypeptide exit tunnel on the outside of the ribosome. Forms the main docking site for trigger factor binding to the ribosome. This is Large ribosomal subunit protein uL23 from Nitrobacter winogradskyi (strain ATCC 25391 / DSM 10237 / CIP 104748 / NCIMB 11846 / Nb-255).